The chain runs to 66 residues: Large ribosomal subunit protein bL35 (66 aa).

The protein belongs to the bacterial ribosomal protein bL35 family.

This is Large ribosomal subunit protein bL35 from Borrelia garinii subsp. bavariensis (strain ATCC BAA-2496 / DSM 23469 / PBi) (Borreliella bavariensis).